A 265-amino-acid polypeptide reads, in one-letter code: Tryptophan synthase alpha chain (265 aa).

Catalysis depends on proton acceptor residues E49 and D60.

The protein belongs to the TrpA family. As to quaternary structure, tetramer of two alpha and two beta chains.

It carries out the reaction (1S,2R)-1-C-(indol-3-yl)glycerol 3-phosphate + L-serine = D-glyceraldehyde 3-phosphate + L-tryptophan + H2O. Its pathway is amino-acid biosynthesis; L-tryptophan biosynthesis; L-tryptophan from chorismate: step 5/5. The alpha subunit is responsible for the aldol cleavage of indoleglycerol phosphate to indole and glyceraldehyde 3-phosphate. This is Tryptophan synthase alpha chain from Desulfosudis oleivorans (strain DSM 6200 / JCM 39069 / Hxd3) (Desulfococcus oleovorans).